Reading from the N-terminus, the 263-residue chain is MTEIKAVKRLGQHFLRDEGIITQLLAAIDPKPQQKILEIGPGLGALTLPVLERCHELYAVELDHRVLQPLSEKAAAVGILHLIERDILNIHFAEVAPAPIRIIGNLPYNLSSPILFHCVAQRSDIVDMHFMLQKEVVDRITAPVDTPAYGRLSVMIQLYCQVEALFDVPPEAFAPPPKVNSAVVRLIPQTQLTWNIESIAHFECVVRSAFSQRRKMLRKSLAAYFEPKELMALDVDPTARAETIDGASFARLANALYLKEKNL.

His13, Leu15, Gly40, Glu61, Asp86, and Asn105 together coordinate S-adenosyl-L-methionine.

This sequence belongs to the class I-like SAM-binding methyltransferase superfamily. rRNA adenine N(6)-methyltransferase family. RsmA subfamily.

Its subcellular location is the cytoplasm. The enzyme catalyses adenosine(1518)/adenosine(1519) in 16S rRNA + 4 S-adenosyl-L-methionine = N(6)-dimethyladenosine(1518)/N(6)-dimethyladenosine(1519) in 16S rRNA + 4 S-adenosyl-L-homocysteine + 4 H(+). Functionally, specifically dimethylates two adjacent adenosines (A1518 and A1519) in the loop of a conserved hairpin near the 3'-end of 16S rRNA in the 30S particle. May play a critical role in biogenesis of 30S subunits. This is Ribosomal RNA small subunit methyltransferase A from Dichelobacter nodosus (strain VCS1703A).